The sequence spans 164 residues: SsrA-binding protein (164 aa).

A disordered region spans residues 141 to 164 (KLHDKRQDEKQKSIKKEINSALKR). Residues 145–158 (KRQDEKQKSIKKEI) show a composition bias toward basic and acidic residues.

This sequence belongs to the SmpB family.

Its subcellular location is the cytoplasm. Its function is as follows. Required for rescue of stalled ribosomes mediated by trans-translation. Binds to transfer-messenger RNA (tmRNA), required for stable association of tmRNA with ribosomes. tmRNA and SmpB together mimic tRNA shape, replacing the anticodon stem-loop with SmpB. tmRNA is encoded by the ssrA gene; the 2 termini fold to resemble tRNA(Ala) and it encodes a 'tag peptide', a short internal open reading frame. During trans-translation Ala-aminoacylated tmRNA acts like a tRNA, entering the A-site of stalled ribosomes, displacing the stalled mRNA. The ribosome then switches to translate the ORF on the tmRNA; the nascent peptide is terminated with the 'tag peptide' encoded by the tmRNA and targeted for degradation. The ribosome is freed to recommence translation, which seems to be the essential function of trans-translation. The chain is SsrA-binding protein from Prochlorococcus marinus (strain AS9601).